The following is a 309-amino-acid chain: Ferrochelatase (309 aa).

2 residues coordinate Fe cation: His-185 and Glu-262.

This sequence belongs to the ferrochelatase family.

The protein resides in the cytoplasm. It catalyses the reaction heme b + 2 H(+) = protoporphyrin IX + Fe(2+). Its pathway is porphyrin-containing compound metabolism; protoheme biosynthesis; protoheme from protoporphyrin-IX: step 1/1. In terms of biological role, catalyzes the ferrous insertion into protoporphyrin IX. The polypeptide is Ferrochelatase (Campylobacter jejuni subsp. jejuni serotype O:23/36 (strain 81-176)).